The sequence spans 547 residues: Glucose-6-phosphate isomerase (547 aa).

Catalysis depends on Glu-351, which acts as the Proton donor. Residues His-382 and Lys-509 contribute to the active site.

It belongs to the GPI family.

Its subcellular location is the cytoplasm. The enzyme catalyses alpha-D-glucose 6-phosphate = beta-D-fructose 6-phosphate. It functions in the pathway carbohydrate biosynthesis; gluconeogenesis. The protein operates within carbohydrate degradation; glycolysis; D-glyceraldehyde 3-phosphate and glycerone phosphate from D-glucose: step 2/4. Catalyzes the reversible isomerization of glucose-6-phosphate to fructose-6-phosphate. The sequence is that of Glucose-6-phosphate isomerase from Coxiella burnetii (strain CbuG_Q212) (Coxiella burnetii (strain Q212)).